Here is a 230-residue protein sequence, read N- to C-terminus: SPbeta prophage-derived putative HNH endonuclease YoqL (230 aa).

An HNH domain is found at 136-188 (CSYCGLKIEDHKILFKGTYIQSDFHKEHVDHKGANDISNCIPACKSCNSSKHD).

Belongs to the HNH nuclease family.

The sequence is that of SPbeta prophage-derived putative HNH endonuclease YoqL (yoqL) from Bacillus subtilis (strain 168).